The following is a 986-amino-acid chain: Ephrin type-A receptor 4-A (986 aa).

An N-terminal signal peptide occupies residues 1-20; it reads MAGIVHGILFCGLFGLCWAV. At 21-547 the chain is on the extracellular side; sequence TGSRIYPASE…MIGEGASPTV (527 aa). The Eph LBD domain maps to 30–209; the sequence is EVTLLDSRSV…FYKKCPLTVR (180 aa). Fibronectin type-III domains are found at residues 328-438 and 439-536; these read PPSA…TNQA and APST…TVPS. Asparagine 340 and asparagine 407 each carry an N-linked (GlcNAc...) asparagine glycan. The helical transmembrane segment at 548–569 threads the bilayer; the sequence is LLVSVAGSIVLVVILIAAFVIS. Residues 570–986 lie on the Cytoplasmic side of the membrane; sequence RRRSKYSKAK…QQIQGRMVPV (417 aa). Phosphotyrosine; by autocatalysis is present on residues tyrosine 595 and tyrosine 601. Residues 620-881 enclose the Protein kinase domain; it reads IKIEKVIGVG…QIVSMLDKLI (262 aa). ATP-binding positions include 626–634 and lysine 652; that span reads IGVGEFGEV. Aspartate 745 functions as the Proton acceptor in the catalytic mechanism. Phosphotyrosine; by autocatalysis occurs at positions 778 and 928. The SAM domain occupies 911–975; the sequence is SQVASVLDWL…LSSVQGMRTQ (65 aa). Residues 984–986 carry the PDZ-binding motif; sequence VPV.

This sequence belongs to the protein kinase superfamily. Tyr protein kinase family. Ephrin receptor subfamily.

The protein localises to the cell membrane. Its subcellular location is the early endosome. The catalysed reaction is L-tyrosyl-[protein] + ATP = O-phospho-L-tyrosyl-[protein] + ADP + H(+). Its function is as follows. Receptor tyrosine kinase which binds membrane-bound ephrin family ligands residing on adjacent cells, leading to contact-dependent bidirectional signaling into neighboring cells. The signaling pathway downstream of the receptor is referred to as forward signaling while the signaling pathway downstream of the ephrin ligand is referred to as reverse signaling. Highly promiscuous, it has the unique property among Eph receptors to bind and to be physiologically activated by both GPI-anchored ephrin-A and transmembrane ephrin-B ligands including EFNA1 and EFNB3. Upon activation by ephrin ligands, modulates cell morphology and integrin-dependent cell adhesion through regulation of the Rac, Rap and Rho GTPases activity. Plays an important role in the development of the nervous system controlling different steps of axonal guidance including the establishment of the corticospinal projections. The protein is Ephrin type-A receptor 4-A (epha4-a) of Xenopus laevis (African clawed frog).